Consider the following 72-residue polypeptide: DNA-directed RNA polymerase subunit omega (72 aa).

It belongs to the RNA polymerase subunit omega family. The RNAP catalytic core consists of 2 alpha, 1 beta, 1 beta' and 1 omega subunit. When a sigma factor is associated with the core the holoenzyme is formed, which can initiate transcription.

It catalyses the reaction RNA(n) + a ribonucleoside 5'-triphosphate = RNA(n+1) + diphosphate. Promotes RNA polymerase assembly. Latches the N- and C-terminal regions of the beta' subunit thereby facilitating its interaction with the beta and alpha subunits. The polypeptide is DNA-directed RNA polymerase subunit omega (Limosilactobacillus reuteri (strain DSM 20016) (Lactobacillus reuteri)).